Here is a 210-residue protein sequence, read N- to C-terminus: Na(+)-translocating NADH-quinone reductase subunit D (210 aa).

The next 5 membrane-spanning stretches (helical) occupy residues 42-62 (FVMT…VSLI), 72-92 (IIVQ…VLKA), 103-123 (VFVG…AFAM), 131-151 (LIDG…VGFF), and 178-198 (NGLM…IWVI).

This sequence belongs to the NqrDE/RnfAE family. In terms of assembly, composed of six subunits; NqrA, NqrB, NqrC, NqrD, NqrE and NqrF.

It is found in the cell inner membrane. It catalyses the reaction a ubiquinone + n Na(+)(in) + NADH + H(+) = a ubiquinol + n Na(+)(out) + NAD(+). Functionally, NQR complex catalyzes the reduction of ubiquinone-1 to ubiquinol by two successive reactions, coupled with the transport of Na(+) ions from the cytoplasm to the periplasm. NqrA to NqrE are probably involved in the second step, the conversion of ubisemiquinone to ubiquinol. The polypeptide is Na(+)-translocating NADH-quinone reductase subunit D (Vibrio parahaemolyticus serotype O3:K6 (strain RIMD 2210633)).